The chain runs to 312 residues: Protoheme IX farnesyltransferase (312 aa).

8 helical membrane passes run 34–54 (LVIF…HPVL), 56–76 (ITSL…NMAL), 119–139 (ILVN…YVVI), 152–172 (IVIG…AATG), 179–199 (LLLF…LALF), 225–245 (ILLY…LGYF), 248–268 (VYGV…IEVF), and 283–303 (LFAF…LEAV).

This sequence belongs to the UbiA prenyltransferase family. Protoheme IX farnesyltransferase subfamily.

It localises to the cell inner membrane. It carries out the reaction heme b + (2E,6E)-farnesyl diphosphate + H2O = Fe(II)-heme o + diphosphate. Its pathway is porphyrin-containing compound metabolism; heme O biosynthesis; heme O from protoheme: step 1/1. Its function is as follows. Converts heme B (protoheme IX) to heme O by substitution of the vinyl group on carbon 2 of heme B porphyrin ring with a hydroxyethyl farnesyl side group. This Bradyrhizobium sp. (strain BTAi1 / ATCC BAA-1182) protein is Protoheme IX farnesyltransferase.